Reading from the N-terminus, the 463-residue chain is Glutamate--tRNA ligase 2 (463 aa).

A 'HIGH' region motif is present at residues 11-21 (PSPTGYLHIGG). The short motif at 240-244 (KLSKR) is the 'KMSKS' region element. Residue Lys-243 participates in ATP binding.

It belongs to the class-I aminoacyl-tRNA synthetase family. Glutamate--tRNA ligase type 1 subfamily. As to quaternary structure, monomer.

The protein resides in the cytoplasm. It catalyses the reaction tRNA(Glu) + L-glutamate + ATP = L-glutamyl-tRNA(Glu) + AMP + diphosphate. In terms of biological role, catalyzes the attachment of glutamate to tRNA(Glu) in a two-step reaction: glutamate is first activated by ATP to form Glu-AMP and then transferred to the acceptor end of tRNA(Glu). The sequence is that of Glutamate--tRNA ligase 2 from Campylobacter jejuni (strain RM1221).